Reading from the N-terminus, the 67-residue chain is UPF0434 protein Lcho_2556 (67 aa).

This sequence belongs to the UPF0434 family.

In Leptothrix cholodnii (strain ATCC 51168 / LMG 8142 / SP-6) (Leptothrix discophora (strain SP-6)), this protein is UPF0434 protein Lcho_2556.